Here is a 185-residue protein sequence, read N- to C-terminus: Probable chorismate pyruvate-lyase (185 aa).

Substrate contacts are provided by R75, L113, and E170.

It belongs to the UbiC family.

It localises to the cytoplasm. The enzyme catalyses chorismate = 4-hydroxybenzoate + pyruvate. It functions in the pathway cofactor biosynthesis; ubiquinone biosynthesis. Functionally, removes the pyruvyl group from chorismate, with concomitant aromatization of the ring, to provide 4-hydroxybenzoate (4HB) for the ubiquinone pathway. This chain is Probable chorismate pyruvate-lyase, found in Coxiella burnetii (strain RSA 493 / Nine Mile phase I).